The following is a 465-amino-acid chain: Mothers against decapentaplegic homolog 1 (465 aa).

Met1 bears the N-acetylmethionine mark. The 125-residue stretch at 12–136 (PAVKRLLGWK…YKRVESPVLP (125 aa)) folds into the MH1 domain. Zn(2+) is bound by residues Cys64, Cys109, Cys121, and His126. The tract at residues 162 to 248 (NEPHMPLNAT…SQPMDTNMMA (87 aa)) is disordered. Residues 179–210 (PNSHPFPHSPNSSYPNSPGSSSSTYPHSPTSS) are compositionally biased toward low complexity. Residues 221–232 (DTPPPAYLPPED) show a composition bias toward pro residues. The MH2 domain maps to 271–465 (WCSIVYYELN…SPHNPISSVS (195 aa)). Position 322 is a phosphothreonine; by MINK1, TNIK and MAP4K4 (Thr322). The segment at 418–428 (KGWGAEYHRQD) is L3 loop. Ser463 and Ser465 each carry phosphoserine.

Belongs to the dwarfin/SMAD family. In terms of assembly, found in a complex with SMAD4 and YY1. Interacts with HGS, NANOG and ZCCHC12. Upon C-terminus phosphorylation: forms trimers with another SMAD1 and the co-SMAD SMAD4. Interacts with PEBP2-alpha subunit, CREB-binding protein (CBP), p300, SMURF1, SMURF2, USP15 and HOXC8. Associates with ZNF423 or ZNF521 in response to BMP2 leading to activate transcription of BMP target genes. Interacts with SKOR1. Interacts (via MH2 domain) with LEMD3. Binding to LEMD3 results in at least a partial reduction of receptor-mediated phosphorylation. Forms a ternary complex with PSMB4 and OAZ1 before PSMB4 is incorporated into the 20S proteasome. Interacts (via MH2 domain) with FAM83G (via MH2 domain); in a SMAD4-independent manner. Interacts with ZC3H3. Interacts with TMEM119. Interacts (via MH1 and MH2 domains) with ZNF8. Interacts with RANBP3L; the interaction increases when SMAD1 is not phosphorylated and mediates SMAD1 nuclear export. Interacts with EGR1; this interaction inhibits SMAD1 dephosphorylation. Interacts with SMAD6. Interacts with YAP1. Interacts with MTMR4; negatively regulates BMP signaling through SMAD1 dephosphorylation and retention in endosomes. Post-translationally, phosphorylation of the C-terminal SVS motif by BMP type 1 receptor kinase activates SMAD1 by promoting dissociation from the receptor and trimerization with SMAD4. Phosphorylation by ERK2 MAP kinase in response to EGF or HGF prevents SMAD1 nuclear accumulation and transcriptional activity in response to BMP. Dephosphorylation, probably by PPM1A, induces its export from the nucleus to the cytoplasm. Dephosphorylation is inhibited by association with EGR1. Phosphorylation by CDK8/9 creates binding sites for YAP1, and subsequent phosphorylation by GSK3 switches off YAP1 binding and adds binding sites for SMURF1. Ubiquitinated by SMAD-specific E3 ubiquitin ligase SMURF1, leading to its degradation. Monoubiquitinated, leading to prevent DNA-binding. Deubiquitination by USP15 alleviates inhibition and promotes activation of TGF-beta target genes. Dephosphorylation, probably by PPM1A, induces its export from the nucleus to the cytoplasm. Phospho-SMAD1 is ubiquitinated by CHIP leading to disruption of the SMAD1-SMAD4 complex. As to expression, ubiquitous. Highest expression seen in the heart and skeletal muscle.

The protein resides in the cytoplasm. Its subcellular location is the nucleus. In terms of biological role, transcriptional modulator that plays a role in various cellular processes, including embryonic development, cell differentiation, and tissue homeostasis. Upon BMP ligand binding to their receptors at the cell surface, is phosphorylated by activated type I BMP receptors (BMPRIs) and associates with SMAD4 to form a heteromeric complex which translocates into the nucleus acting as transcription factor. In turn, the hetero-trimeric complex recognizes cis-regulatory elements containing Smad Binding Elements (SBEs) to modulate the outcome of the signaling network. SMAD1/OAZ1/PSMB4 complex mediates the degradation of the CREBBP/EP300 repressor SNIP1. Positively regulates BMP4-induced expression of odontogenic development regulator MSX1 following IPO7-mediated nuclear import. The protein is Mothers against decapentaplegic homolog 1 (SMAD1) of Homo sapiens (Human).